A 232-amino-acid polypeptide reads, in one-letter code: Triosephosphate isomerase (232 aa).

N6–K8 provides a ligand contact to substrate. H91 acts as the Electrophile in catalysis. E158 serves as the catalytic Proton acceptor. Substrate-binding residues include G164 and S194.

Belongs to the triosephosphate isomerase family. Homodimer.

It localises to the cytoplasm. The catalysed reaction is D-glyceraldehyde 3-phosphate = dihydroxyacetone phosphate. The protein operates within carbohydrate biosynthesis; gluconeogenesis. It participates in carbohydrate degradation; glycolysis; D-glyceraldehyde 3-phosphate from glycerone phosphate: step 1/1. Functionally, involved in the gluconeogenesis. Catalyzes stereospecifically the conversion of dihydroxyacetone phosphate (DHAP) to D-glyceraldehyde-3-phosphate (G3P). This is Triosephosphate isomerase from Campylobacter hominis (strain ATCC BAA-381 / DSM 21671 / CCUG 45161 / LMG 19568 / NCTC 13146 / CH001A).